The sequence spans 689 residues: Polyribonucleotide nucleotidyltransferase (689 aa).

2 residues coordinate Mg(2+): Asp482 and Asp488. One can recognise a KH domain in the interval 549–608 (PRMITLTIPQNKIGELIGPGGKNIRKIQEDNNVKIDIEETGRVFISGVESDGVKSAKEYV). One can recognise an S1 motif domain in the interval 618–686 (GKIYKSRVTK…KQGRINLSIK (69 aa)).

This sequence belongs to the polyribonucleotide nucleotidyltransferase family. Requires Mg(2+) as cofactor.

It localises to the cytoplasm. The catalysed reaction is RNA(n+1) + phosphate = RNA(n) + a ribonucleoside 5'-diphosphate. Involved in mRNA degradation. Catalyzes the phosphorolysis of single-stranded polyribonucleotides processively in the 3'- to 5'-direction. The protein is Polyribonucleotide nucleotidyltransferase of Endomicrobium trichonymphae.